We begin with the raw amino-acid sequence, 416 residues long: Transcription factor caaR (416 aa).

Residues 13-44 (CDRCYAQKLRCPRPSTNDDASCIRCLRQKVQC) constitute a DNA-binding region (zn(2)-C6 fungal-type). Disordered stretches follow at residues 68-90 (ATAGAPPITTTTTTAAPSSSDTA) and 130-150 (QPPPLDTTPPPRSLSASGLDN). The segment covering 130-141 (QPPPLDTTPPPR) has biased composition (pro residues). 2 helical membrane-spanning segments follow: residues 249–269 (VIYHFTIACYSLLLLIYATLL) and 302–322 (SAPSLVELRLVLLFHMITYFL).

It is found in the membrane. It localises to the nucleus. Functionally, transcription factor that positively regulates the expression of the gene cluster that mediates the biosynthesis of the acyltetronic acid derivatives carlosic acid, agglomerin F and carlosic acid methyl ether. In Aspergillus niger (strain ATCC MYA-4892 / CBS 513.88 / FGSC A1513), this protein is Transcription factor caaR.